The primary structure comprises 233 residues: Octanoyltransferase (233 aa).

The BPL/LPL catalytic domain occupies 32 to 213; sequence NNIDGILLLL…NFKMIFETDL (182 aa). Substrate is bound by residues 77 to 84, 144 to 146, and 157 to 159; these read RGGNVTYH, AIG, and GFA. Cysteine 175 acts as the Acyl-thioester intermediate in catalysis.

It belongs to the LipB family.

It is found in the cytoplasm. The catalysed reaction is octanoyl-[ACP] + L-lysyl-[protein] = N(6)-octanoyl-L-lysyl-[protein] + holo-[ACP] + H(+). Its pathway is protein modification; protein lipoylation via endogenous pathway; protein N(6)-(lipoyl)lysine from octanoyl-[acyl-carrier-protein]: step 1/2. Its function is as follows. Catalyzes the transfer of endogenously produced octanoic acid from octanoyl-acyl-carrier-protein onto the lipoyl domains of lipoate-dependent enzymes. Lipoyl-ACP can also act as a substrate although octanoyl-ACP is likely to be the physiological substrate. The protein is Octanoyltransferase of Clostridium kluyveri (strain ATCC 8527 / DSM 555 / NBRC 12016 / NCIMB 10680 / K1).